The following is a 293-amino-acid chain: MASITLTPSEKDIQAFLEHYQTSLAPSKNPYIRYFLKLPQATVSIYTSGKILLQGEGAEKYASFFGYQAVEQTSGQNLPLIGTDEVGNGSYFGGLAVVAAFVTPDQHDFLRKLGVGDSKTLTDQKIRQITPILKEKIQHQALLLSPSKYNEVIGDRYNAVSVKVALHNQAIYLLLQKGVQPEKIVIDAFTSAKNYDKYLAQEANRFSNPISLEEKAEGKYLSVAVSSVIARDLFLENLENLGRELGYQLPSGAGTASDKVASQILQAYGMQGLSFCAKLHFKNTEKAKKRLER.

An RNase H type-2 domain is found at 78-293; sequence LPLIGTDEVG…TEKAKKRLER (216 aa). Positions 84, 85, and 187 each coordinate a divalent metal cation.

It belongs to the RNase HII family. RnhC subfamily. Mn(2+) serves as cofactor. It depends on Mg(2+) as a cofactor.

It localises to the cytoplasm. The catalysed reaction is Endonucleolytic cleavage to 5'-phosphomonoester.. In terms of biological role, endonuclease that specifically degrades the RNA of RNA-DNA hybrids. The protein is Ribonuclease HIII (rnhC) of Streptococcus pneumoniae serotype 4 (strain ATCC BAA-334 / TIGR4).